Reading from the N-terminus, the 566-residue chain is Berberine bridge enzyme-like D-2 (566 aa).

A signal peptide spans 1 to 33; the sequence is MKRNISMSLQRLLIILMMISFLFTSLLVPSVSA. A disulfide bond links Cys-42 and Cys-103. A glycan (N-linked (GlcNAc...) asparagine) is linked at Asn-50. One can recognise an FAD-binding PCMH-type domain in the interval 81–257; it reads SKPKPTVIIV…YAWKIRLLKV (177 aa). His-118 bears the Pros-8alpha-FAD histidine mark. Residues Asn-364, Asn-378, and Asn-503 are each glycosylated (N-linked (GlcNAc...) asparagine).

Belongs to the oxygen-dependent FAD-linked oxidoreductase family. It depends on FAD as a cofactor.

The protein resides in the vacuole. It functions in the pathway alkaloid biosynthesis; nicotine biosynthesis. Its function is as follows. Involved in the biosynthesis of pyridine alkaloid natural products, leading mainly to the production of anabasine, anatabine, nicotine and nornicotine, effective deterrents against herbivores with antiparasitic and pesticide properties (neurotoxins); nornicotine serves as the precursor in the synthesis of the carcinogen compound N'-nitrosonornicotine (NNN). Catalyzes a late oxidation step subsequent to the pyridine ring condensation reaction in the biosynthesis of alkaloids. The polypeptide is Berberine bridge enzyme-like D-2 (Nicotiana tabacum (Common tobacco)).